The primary structure comprises 81 residues: Acyl carrier protein (81 aa).

The Carrier domain occupies 2 to 77; the sequence is ASIEERVVDI…EAIDFIEKEK (76 aa). Ser37 bears the O-(pantetheine 4'-phosphoryl)serine mark.

This sequence belongs to the acyl carrier protein (ACP) family. 4'-phosphopantetheine is transferred from CoA to a specific serine of apo-ACP by AcpS. This modification is essential for activity because fatty acids are bound in thioester linkage to the sulfhydryl of the prosthetic group.

Its subcellular location is the cytoplasm. It functions in the pathway lipid metabolism; fatty acid biosynthesis. Its function is as follows. Carrier of the growing fatty acid chain in fatty acid biosynthesis. The sequence is that of Acyl carrier protein from Rhodopirellula baltica (strain DSM 10527 / NCIMB 13988 / SH1).